A 66-amino-acid polypeptide reads, in one-letter code: Protein translocase subunit SecE (66 aa).

Residues 34–54 (LVVIVAVFVFSLICLVLDYGI) form a helical membrane-spanning segment.

This sequence belongs to the SecE/SEC61-gamma family. As to quaternary structure, component of the Sec protein translocase complex. Heterotrimer consisting of SecY, SecE and SecG subunits. The heterotrimers can form oligomers, although 1 heterotrimer is thought to be able to translocate proteins. Interacts with the ribosome. Interacts with SecDF, and other proteins may be involved. Interacts with SecA.

The protein localises to the cell inner membrane. Its function is as follows. Essential subunit of the Sec protein translocation channel SecYEG. Clamps together the 2 halves of SecY. May contact the channel plug during translocation. In Rickettsia bellii (strain RML369-C), this protein is Protein translocase subunit SecE.